Consider the following 587-residue polypeptide: Putative inactive receptor-like protein kinase At1g64210 (587 aa).

The signal sequence occupies residues 1-19 (MQIFLFFFSLILCFVLISS). The Extracellular portion of the chain corresponds to 20–232 (QTLEDDKKAL…KTPFGLSQLA (213 aa)). Asn-37 and Asn-44 each carry an N-linked (GlcNAc...) asparagine glycan. LRR repeat units follow at residues 89–112 (SLKF…TNLK), 113–136 (SLTH…SELK), 137–160 (NLKV…SGLT), 161–183 (SLQV…HLPK), and 184–205 (LSQI…LQRF). Residues Asn-149, Asn-169, Asn-188, and Asn-214 are each glycosylated (N-linked (GlcNAc...) asparagine). The helical transmembrane segment at 233–253 (FLLILSAACVLCVSGLSFIMI) threads the bilayer. Topologically, residues 254–587 (TCFGKTRISG…IEDIRSVDAE (334 aa)) are cytoplasmic. The region spanning 307 to 581 (SSSAEVLGKG…AQVLKLIEDI (275 aa)) is the Protein kinase domain. At Ser-309 the chain carries Phosphoserine. ATP contacts are provided by residues 313 to 321 (LGKGAFGTT) and Lys-335. Ser-386 carries the phosphoserine modification. A phosphothreonine mark is found at Thr-462, Thr-463, Thr-466, and Thr-477.

It localises to the cell membrane. This chain is Putative inactive receptor-like protein kinase At1g64210, found in Arabidopsis thaliana (Mouse-ear cress).